A 198-amino-acid chain; its full sequence is Na(+)-translocating NADH-quinone reductase subunit E (198 aa).

6 consecutive transmembrane segments (helical) span residues 11–31 (SIFI…FLAV), 39–59 (FGLG…NNLV), 77–97 (FLNF…LEMI), 110–130 (GIFL…SFMV), 140–160 (IVYG…LAGI), and 176–196 (LGIT…FSGV).

Belongs to the NqrDE/RnfAE family. As to quaternary structure, composed of six subunits; NqrA, NqrB, NqrC, NqrD, NqrE and NqrF.

It localises to the cell inner membrane. The enzyme catalyses a ubiquinone + n Na(+)(in) + NADH + H(+) = a ubiquinol + n Na(+)(out) + NAD(+). Functionally, NQR complex catalyzes the reduction of ubiquinone-1 to ubiquinol by two successive reactions, coupled with the transport of Na(+) ions from the cytoplasm to the periplasm. NqrA to NqrE are probably involved in the second step, the conversion of ubisemiquinone to ubiquinol. This chain is Na(+)-translocating NADH-quinone reductase subunit E, found in Photobacterium profundum (strain SS9).